A 456-amino-acid polypeptide reads, in one-letter code: RUN domain-containing protein 3B (456 aa).

Residues 1–26 are disordered; sequence MASRSLGGLSGIRGGGGGGGKKSLSS. Residues 8 to 21 show a composition bias toward gly residues; sequence GLSGIRGGGGGGGK. Arg-13 carries the omega-N-methylarginine modification. In terms of domain architecture, RUN spans 57–189; that stretch reads DDSSPEFNNF…IDFSFCLKGE (133 aa). Phosphoserine is present on residues Ser-215 and Ser-216. Residues 300–325 adopt a coiled-coil conformation; it reads AHKLEKEQLEYIIVELQDQLTVLKNN. Positions 382–405 are disordered; sequence SLSQTSLDPGQSQEGDGKQDTLNI.

This sequence belongs to the RUNDC3 family. Interacts with RAP2A.

In Macaca fascicularis (Crab-eating macaque), this protein is RUN domain-containing protein 3B (RUNDC3B).